Reading from the N-terminus, the 74-residue chain is DUP240 protein DFP2 (74 aa).

The protein belongs to the DUP/COS family.

The protein localises to the cytoplasm. It is found in the membrane. The polypeptide is DUP240 protein DFP2 (Saccharomyces cerevisiae (strain ATCC 204508 / S288c) (Baker's yeast)).